Consider the following 137-residue polypeptide: Small ribosomal subunit protein uS13 (137 aa).

Positions 114–137 (VTQKNARTRKGPRKTIMAKKDKGK) are disordered. The segment covering 119–130 (ARTRKGPRKTIM) has biased composition (basic residues).

Belongs to the universal ribosomal protein uS13 family. In terms of assembly, part of the 30S ribosomal subunit. Forms a loose heterodimer with protein S19. Forms two bridges to the 50S subunit in the 70S ribosome.

In terms of biological role, located at the top of the head of the 30S subunit, it contacts several helices of the 16S rRNA. In the 70S ribosome it contacts the 23S rRNA (bridge B1a) and protein L5 of the 50S subunit (bridge B1b), connecting the 2 subunits; these bridges are implicated in subunit movement. Contacts the tRNAs in the A and P-sites. The chain is Small ribosomal subunit protein uS13 from Mesomycoplasma hyopneumoniae (strain 232) (Mycoplasma hyopneumoniae).